Here is a 478-residue protein sequence, read N- to C-terminus: tRNA-2-methylthio-N(6)-dimethylallyladenosine synthase (478 aa).

The MTTase N-terminal domain occupies lysine 39–asparagine 157. Cysteine 48, cysteine 84, cysteine 118, cysteine 194, cysteine 198, and cysteine 201 together coordinate [4Fe-4S] cluster. The Radical SAM core domain occupies arginine 180–glutamate 410. One can recognise a TRAM domain in the interval glutamate 410–asparagine 477.

This sequence belongs to the methylthiotransferase family. MiaB subfamily. As to quaternary structure, monomer. Requires [4Fe-4S] cluster as cofactor.

It is found in the cytoplasm. The enzyme catalyses N(6)-dimethylallyladenosine(37) in tRNA + (sulfur carrier)-SH + AH2 + 2 S-adenosyl-L-methionine = 2-methylsulfanyl-N(6)-dimethylallyladenosine(37) in tRNA + (sulfur carrier)-H + 5'-deoxyadenosine + L-methionine + A + S-adenosyl-L-homocysteine + 2 H(+). Catalyzes the methylthiolation of N6-(dimethylallyl)adenosine (i(6)A), leading to the formation of 2-methylthio-N6-(dimethylallyl)adenosine (ms(2)i(6)A) at position 37 in tRNAs that read codons beginning with uridine. This Clostridioides difficile (strain 630) (Peptoclostridium difficile) protein is tRNA-2-methylthio-N(6)-dimethylallyladenosine synthase.